A 312-amino-acid chain; its full sequence is Olfactory receptor 4F6 (312 aa).

The Extracellular segment spans residues 1-25; it reads MDEANHSVVSEFVFLGLSDSRKIQL. Asparagine 5 carries N-linked (GlcNAc...) asparagine glycosylation. The chain crosses the membrane as a helical span at residues 26–49; sequence LLFLFFSVFYVSSLMGNLLIVLTV. The Cytoplasmic segment spans residues 50–57; sequence TSDPRLQS. A helical transmembrane segment spans residues 58 to 79; it reads PMYFLLANLSIINLVFCSSTAP. At 80 to 100 the chain is on the extracellular side; it reads KMIYDLFRKHKTISFGGCVVQ. An intrachain disulfide couples cysteine 97 to cysteine 189. A helical transmembrane segment spans residues 101–120; the sequence is IFFIHAVGGTEMVLLIAMAF. Residues 121-139 lie on the Cytoplasmic side of the membrane; that stretch reads DRYVAICKPLHYLTIMNPQ. Residues 140 to 158 form a helical membrane-spanning segment; it reads RCILFLVISWIIGIIHSVI. Topologically, residues 159–195 are extracellular; that stretch reads QLAFVVDLLFCGPNELDSFFCDLPRFIKLACIETYTL. The helical transmembrane segment at 196-219 threads the bilayer; that stretch reads GFMVTANSGFISLASFLILIISYI. The Cytoplasmic portion of the chain corresponds to 220–235; the sequence is FILVTVQKKSSGGIFK. The chain crosses the membrane as a helical span at residues 236-258; it reads AFSMLSAHVIVVVLVFGPLIFFY. The Extracellular segment spans residues 259–269; that stretch reads IFPFPTSHLDK. The helical transmembrane segment at 270–289 threads the bilayer; the sequence is FLAIFDAVITPVLNPVIYTF. Topologically, residues 290–312 are cytoplasmic; the sequence is RNKEMMVAMRRRCSQFVNYSKIF.

It belongs to the G-protein coupled receptor 1 family.

It is found in the cell membrane. Its function is as follows. Odorant receptor. This chain is Olfactory receptor 4F6 (OR4F6), found in Homo sapiens (Human).